A 502-amino-acid polypeptide reads, in one-letter code: Glycerol kinase (502 aa).

Threonine 14 contacts ADP. Residues threonine 14 and threonine 15 each contribute to the ATP site. Threonine 14 provides a ligand contact to sn-glycerol 3-phosphate. Arginine 18 lines the ADP pocket. The sn-glycerol 3-phosphate site is built by arginine 84, glutamate 85, tyrosine 136, and aspartate 245. Glycerol contacts are provided by arginine 84, glutamate 85, tyrosine 136, aspartate 245, and glutamine 246. Residues threonine 267 and glycine 314 each coordinate ADP. 4 residues coordinate ATP: threonine 267, glycine 314, glutamine 318, and glycine 415. Residues glycine 415 and asparagine 419 each contribute to the ADP site.

This sequence belongs to the FGGY kinase family.

It catalyses the reaction glycerol + ATP = sn-glycerol 3-phosphate + ADP + H(+). Its pathway is polyol metabolism; glycerol degradation via glycerol kinase pathway; sn-glycerol 3-phosphate from glycerol: step 1/1. With respect to regulation, inhibited by fructose 1,6-bisphosphate (FBP). In terms of biological role, key enzyme in the regulation of glycerol uptake and metabolism. Catalyzes the phosphorylation of glycerol to yield sn-glycerol 3-phosphate. The polypeptide is Glycerol kinase (Acaryochloris marina (strain MBIC 11017)).